The primary structure comprises 894 residues: DNA mismatch repair protein MutS (894 aa).

629-636 (GPNMGGKS) lines the ATP pocket. The tract at residues 819-840 (TPTPQLDLFAPPPHPDTSDDDE) is disordered.

This sequence belongs to the DNA mismatch repair MutS family.

Functionally, this protein is involved in the repair of mismatches in DNA. It is possible that it carries out the mismatch recognition step. This protein has a weak ATPase activity. The chain is DNA mismatch repair protein MutS from Cupriavidus pinatubonensis (strain JMP 134 / LMG 1197) (Cupriavidus necator (strain JMP 134)).